The following is a 477-amino-acid chain: Aspartyl/glutamyl-tRNA(Asn/Gln) amidotransferase subunit B (477 aa).

Belongs to the GatB/GatE family. GatB subfamily. In terms of assembly, heterotrimer of A, B and C subunits.

It catalyses the reaction L-glutamyl-tRNA(Gln) + L-glutamine + ATP + H2O = L-glutaminyl-tRNA(Gln) + L-glutamate + ADP + phosphate + H(+). It carries out the reaction L-aspartyl-tRNA(Asn) + L-glutamine + ATP + H2O = L-asparaginyl-tRNA(Asn) + L-glutamate + ADP + phosphate + 2 H(+). Allows the formation of correctly charged Asn-tRNA(Asn) or Gln-tRNA(Gln) through the transamidation of misacylated Asp-tRNA(Asn) or Glu-tRNA(Gln) in organisms which lack either or both of asparaginyl-tRNA or glutaminyl-tRNA synthetases. The reaction takes place in the presence of glutamine and ATP through an activated phospho-Asp-tRNA(Asn) or phospho-Glu-tRNA(Gln). The chain is Aspartyl/glutamyl-tRNA(Asn/Gln) amidotransferase subunit B from Coxiella burnetii (strain CbuK_Q154) (Coxiella burnetii (strain Q154)).